A 215-amino-acid chain; its full sequence is Pyridoxine/pyridoxamine 5'-phosphate oxidase (215 aa).

Substrate contacts are provided by residues 9-12 and K69; that span reads RRDY. Residues 64–69, 79–80, K86, and Q108 each bind FMN; these read RVLLLK and FS. Y126, R130, and S134 together coordinate substrate. FMN-binding positions include 143–144 and W188; that span reads QS. Position 194-196 (194-196) interacts with substrate; sequence RLH. R198 is an FMN binding site.

It belongs to the pyridoxamine 5'-phosphate oxidase family. Homodimer. FMN serves as cofactor.

It catalyses the reaction pyridoxamine 5'-phosphate + O2 + H2O = pyridoxal 5'-phosphate + H2O2 + NH4(+). The enzyme catalyses pyridoxine 5'-phosphate + O2 = pyridoxal 5'-phosphate + H2O2. It functions in the pathway cofactor metabolism; pyridoxal 5'-phosphate salvage; pyridoxal 5'-phosphate from pyridoxamine 5'-phosphate: step 1/1. Its pathway is cofactor metabolism; pyridoxal 5'-phosphate salvage; pyridoxal 5'-phosphate from pyridoxine 5'-phosphate: step 1/1. Functionally, catalyzes the oxidation of either pyridoxine 5'-phosphate (PNP) or pyridoxamine 5'-phosphate (PMP) into pyridoxal 5'-phosphate (PLP). This is Pyridoxine/pyridoxamine 5'-phosphate oxidase from Azotobacter vinelandii (strain DJ / ATCC BAA-1303).